Consider the following 442-residue polypeptide: Glutamyl-tRNA reductase (442 aa).

Residues 49–52 (TCNR), Ser109, 114–116 (EGQ), and Gln120 contribute to the substrate site. The active-site Nucleophile is Cys50. Position 198–203 (198–203 (GAGRMA)) interacts with NADP(+). The tract at residues 420-442 (MAAAQRLFDLPGDDADRDRSDAK) is disordered. Positions 433-442 (DADRDRSDAK) are enriched in basic and acidic residues.

It belongs to the glutamyl-tRNA reductase family. In terms of assembly, homodimer.

It catalyses the reaction (S)-4-amino-5-oxopentanoate + tRNA(Glu) + NADP(+) = L-glutamyl-tRNA(Glu) + NADPH + H(+). It participates in porphyrin-containing compound metabolism; protoporphyrin-IX biosynthesis; 5-aminolevulinate from L-glutamyl-tRNA(Glu): step 1/2. The protein operates within porphyrin-containing compound metabolism; chlorophyll biosynthesis. In terms of biological role, catalyzes the NADPH-dependent reduction of glutamyl-tRNA(Glu) to glutamate 1-semialdehyde (GSA). The polypeptide is Glutamyl-tRNA reductase (Synechococcus sp. (strain RCC307)).